Consider the following 465-residue polypeptide: ATP synthase subunit beta (465 aa).

Residue 154–161 (GGAGVGKT) coordinates ATP.

This sequence belongs to the ATPase alpha/beta chains family. As to quaternary structure, F-type ATPases have 2 components, CF(1) - the catalytic core - and CF(0) - the membrane proton channel. CF(1) has five subunits: alpha(3), beta(3), gamma(1), delta(1), epsilon(1). CF(0) has three main subunits: a(1), b(2) and c(9-12). The alpha and beta chains form an alternating ring which encloses part of the gamma chain. CF(1) is attached to CF(0) by a central stalk formed by the gamma and epsilon chains, while a peripheral stalk is formed by the delta and b chains.

It is found in the cell inner membrane. It catalyses the reaction ATP + H2O + 4 H(+)(in) = ADP + phosphate + 5 H(+)(out). Its function is as follows. Produces ATP from ADP in the presence of a proton gradient across the membrane. The catalytic sites are hosted primarily by the beta subunits. In Methylobacillus flagellatus (strain ATCC 51484 / DSM 6875 / VKM B-1610 / KT), this protein is ATP synthase subunit beta.